The chain runs to 264 residues: Glutamate racemase (264 aa).

Residues 10 to 11 (DS) and 42 to 43 (YG) each bind substrate. Residue Cys73 is the Proton donor/acceptor of the active site. Residue 74–75 (NT) participates in substrate binding. The active-site Proton donor/acceptor is the Cys183. Residue 184–185 (TH) participates in substrate binding.

Belongs to the aspartate/glutamate racemases family.

It carries out the reaction L-glutamate = D-glutamate. Its pathway is cell wall biogenesis; peptidoglycan biosynthesis. In terms of biological role, provides the (R)-glutamate required for cell wall biosynthesis. The chain is Glutamate racemase from Streptococcus agalactiae serotype Ia (strain ATCC 27591 / A909 / CDC SS700).